The primary structure comprises 201 residues: Peptidyl-tRNA hydrolase (201 aa).

Tyr14 serves as a coordination point for tRNA. His19 acts as the Proton acceptor in catalysis. TRNA-binding residues include Tyr64, Asn66, and Asn112.

The protein belongs to the PTH family. In terms of assembly, monomer.

The protein localises to the cytoplasm. It carries out the reaction an N-acyl-L-alpha-aminoacyl-tRNA + H2O = an N-acyl-L-amino acid + a tRNA + H(+). Functionally, hydrolyzes ribosome-free peptidyl-tRNAs (with 1 or more amino acids incorporated), which drop off the ribosome during protein synthesis, or as a result of ribosome stalling. In terms of biological role, catalyzes the release of premature peptidyl moieties from peptidyl-tRNA molecules trapped in stalled 50S ribosomal subunits, and thus maintains levels of free tRNAs and 50S ribosomes. The chain is Peptidyl-tRNA hydrolase from Bradyrhizobium sp. (strain ORS 278).